We begin with the raw amino-acid sequence, 224 residues long: PKHD-type hydroxylase Shewmr7_0698 (224 aa).

A Fe2OG dioxygenase domain is found at 78-176; sequence QFYPPLFNRY…RTAAFMWLQS (99 aa). Residues His-96, Asp-98, and His-157 each contribute to the Fe cation site. Residue Arg-167 participates in 2-oxoglutarate binding.

Fe(2+) serves as cofactor. Requires L-ascorbate as cofactor.

The sequence is that of PKHD-type hydroxylase Shewmr7_0698 from Shewanella sp. (strain MR-7).